The following is a 346-amino-acid chain: Fe(3+) ions import ATP-binding protein FbpC 2 (346 aa).

The region spanning 2–234 is the ABC transporter domain; that stretch reads LELHRVSKSF…PNSEDIATFL (233 aa). 34–41 lines the ATP pocket; the sequence is GPSGSGKT.

Belongs to the ABC transporter superfamily. Fe(3+) ion importer (TC 3.A.1.10) family. In terms of assembly, the complex is composed of two ATP-binding proteins (FbpC), two transmembrane proteins (FbpB) and a solute-binding protein (FbpA).

It is found in the cell inner membrane. The enzyme catalyses Fe(3+)(out) + ATP + H2O = Fe(3+)(in) + ADP + phosphate + H(+). Functionally, part of the ABC transporter complex FbpABC involved in Fe(3+) ions import. Responsible for energy coupling to the transport system. The polypeptide is Fe(3+) ions import ATP-binding protein FbpC 2 (Pectobacterium atrosepticum (strain SCRI 1043 / ATCC BAA-672) (Erwinia carotovora subsp. atroseptica)).